Reading from the N-terminus, the 220-residue chain is MDNNDQISNLCLGALQLLADQPISVISNEPSEEQRNEHVLKKWENNVLRHWKILFSLFMQTCGDSVQGNAAFSILNFMTTNSLVGQLYQRLYDESNSLGFISSPLNETEHLSEENLKIESSITFTSEEIEKEKENIKSVLLPSVQSISSSLELYASKESDYRSSIEGVLADLKLARARWEIVRNVTQILLLESGISFLENKKLAYIMDLCGDREDNYSSY.

It belongs to the CENP-H/MCM16 family. As to quaternary structure, component of the inner kinetochore constitutive centromere-associated network (CCAN) (also known as central kinetochore Sim4 complex in fission yeast), which is composed of at least cnl2, cnp3, cnp20, fta1, fta2, fta3, fta4, fta6, fta7, mal2, mhf1, mhf2, mis6, mis15, mis17, sim4 and wip1.

It is found in the nucleus. It localises to the chromosome. Its subcellular location is the centromere. The protein localises to the kinetochore. Functionally, component of the kinetochore, a multiprotein complex that assembles on centromeric DNA and attaches chromosomes to spindle microtubules, mediating chromosome segregation and sister chromatid segregation during meiosis and mitosis. Component of the inner kinetochore constitutive centromere-associated network (CCAN), which serves as a structural platform for outer kinetochore assembly. Fta2, fta3 and fta4 associate with the central core (cnt) and inner repeat (inr) region of the centromere. The polypeptide is Inner kinetochore subunit fta3 (fta3) (Schizosaccharomyces pombe (strain 972 / ATCC 24843) (Fission yeast)).